The primary structure comprises 763 residues: DEK domain-containing chromatin-associated protein 3 (763 aa).

2 disordered regions span residues 1-324 and 458-681; these read MGED…RERK and TGDV…SDKV. Positions 11-20 are enriched in polar residues; sequence PTANKTTSLE. 4 stretches are compositionally biased toward basic and acidic residues: residues 32 to 44, 72 to 97, 124 to 172, and 180 to 242; these read AGGKETQELAKDE, SEVKKNEDNAETQKMEEKVEVTKDEG, TVMK…KANG, and DIKE…KVED. Residues 60-96 adopt a coiled-coil conformation; it reads KDDEKAETEDKESEVKKNEDNAETQKMEEKVEVTKDE. The stretch at 214-286 forms a coiled coil; the sequence is GKEKEDKEEN…KEESKGSKKR (73 aa). Positions 243 to 252 are enriched in acidic residues; sequence EKEGSEDEND. Residues 253–264 are compositionally biased toward basic and acidic residues; the sequence is NEKVESKDAKED. Over residues 265 to 277 the composition is skewed to acidic residues; that stretch reads EKEETNDDKEDEK. The short motif at 284-291 is the Nuclear localization signal 1 element; it reads KKRGKGTS. Residues 295–311 show a composition bias toward basic and acidic residues; sequence KVREKNKTEEVKKDAEP. Residues 475-484 show a composition bias toward basic residues; it reads KGAKRKRTPK. The short motif at 483-490 is the Nuclear localization signal 2 element; sequence PKKTSPTA. Over residues 485–496 the composition is skewed to low complexity; sequence KTSPTAGSSSSK. A coiled-coil region spans residues 513–551; it reads KKSLAHSDDESEEEKEEEEKQEEEKAEEKEEKKEEENEN. Residues 521–533 show a composition bias toward acidic residues; the sequence is DESEEEKEEEEKQ. Residues 534–547 show a composition bias toward basic and acidic residues; that stretch reads EEEKAEEKEEKKEE. Acidic residues predominate over residues 557–578; that stretch reads SEDEAPQPSESEEKDESEEHSE. Low complexity-rich tracts occupy residues 606 to 615 and 650 to 660; these read AVVAAKSSPP and PIKASPAPSKS. Over residues 661-681 the composition is skewed to basic and acidic residues; the sequence is ASKEKPVKRAGKGKDKPSDKV. Positions 676–731 constitute a DEK-C domain; sequence KPSDKVLKNAIVEILKRVDFSTATFTDILKELAKEFTEDLTPRKSSIKMIIQEELT. 2 consecutive DNA-binding regions follow at residues 694-708 and 723-727; these read DFSTATFTDILKELA and KMIIQ. The stretch at 723–753 forms a coiled coil; that stretch reads KMIIQEELTKLADEEEEEEKKEEDSEKEEAG. Positions 730–763 are disordered; that stretch reads LTKLADEEEEEEKKEEDSEKEEAGGSGGGEEVKA. A compositionally biased stretch (gly residues) spans 753–763; sequence GGSGGGEEVKA.

Found in a mRNA splicing-dependent exon junction complex (EJC). Binds specifically histones H3 and H4. Interacts with TOP1A, SCC3, At1g61730, At1g20940, At1g13930, DEK4, HDT1, NIT1, SHL, CYP19-1, GEBPL, HSP70-3, PDP2, PDP3, KIN2, RPL11A and PDS5A. As to expression, highly expressed in young seedlings.

It localises to the nucleus. The protein localises to the nucleolus. Functionally, chromatin-associated protein which contributes to the modulation of chromatin structure (such as super-helical structure of DNA) and function. Binds to chromatin of protein-coding genes throughout the genome to regulate nucleosome occupancy and chromatin accessibility, and to modulate the expression of target genes. Negative regulator of stress tolerance (e.g. high salt). The protein is DEK domain-containing chromatin-associated protein 3 of Arabidopsis thaliana (Mouse-ear cress).